Consider the following 557-residue polypeptide: E3 ubiquitin-protein ligase rnf168 (557 aa).

Residues 16 to 55 (CPICQEILLEPVTLPCKHTLCNPCFQMTVEKASLCCPFCR) form an RING-type zinc finger. Residues 112–130 (LCQPGEIRQEYEAEVSKIE) carry the LR motif 1 motif. The short motif at 145–153 (EDYIQKLLA) is the UMI motif element. 2 short sequence motifs (MIU motif) span residues 170–193 (MEEQ…VSNA) and 422–445 (RRRQ…KELK). The LR motif 2 motif lies at 449–460 (RGKGSPDEYELR). The segment at 482-543 (PLRKEIPVQD…GINVLKPINK (62 aa)) is disordered. Positions 490–500 (QDNSRNTQSEY) are enriched in polar residues. A compositionally biased stretch (basic residues) spans 508 to 521 (PSRKNSVRSARVRQ).

This sequence belongs to the RNF168 family. In terms of assembly, monomer.

Its subcellular location is the nucleus. The enzyme catalyses S-ubiquitinyl-[E2 ubiquitin-conjugating enzyme]-L-cysteine + [acceptor protein]-L-lysine = [E2 ubiquitin-conjugating enzyme]-L-cysteine + N(6)-ubiquitinyl-[acceptor protein]-L-lysine.. It participates in protein modification; protein ubiquitination. Its function is as follows. E3 ubiquitin-protein ligase required for accumulation of repair proteins to sites of DNA damage. Acts with ube2n/ubc13 to amplify the rnf8-dependent histone ubiquitination. Recruited to sites of DNA damage at double-strand breaks (DSBs) by binding to ubiquitinated histone H2A and ubiquitinates histone H2A and H2AX, leading to amplify the rnf8-dependent H2A ubiquitination and promoting the formation of 'Lys-63'-linked ubiquitin conjugates. This leads to concentrate ubiquitinated histones H2A and H2AX at DNA lesions to the threshold required for recruitment of tp53bp1 and brca1. Catalyzes monoubiquitination of 'Lys-13' and 'Lys-15' of nucleosomal histone H2A (H2AK13Ub and H2AK15Ub, respectively). The polypeptide is E3 ubiquitin-protein ligase rnf168 (Xenopus laevis (African clawed frog)).